The primary structure comprises 241 residues: Carboxy-S-adenosyl-L-methionine synthase (241 aa).

S-adenosyl-L-methionine-binding positions include Tyr38, 63–65, 88–89, 116–117, Asn131, and Arg198; these read GCS, DN, and DI.

Belongs to the class I-like SAM-binding methyltransferase superfamily. Cx-SAM synthase family. Homodimer.

The enzyme catalyses prephenate + S-adenosyl-L-methionine = carboxy-S-adenosyl-L-methionine + 3-phenylpyruvate + H2O. Catalyzes the conversion of S-adenosyl-L-methionine (SAM) to carboxy-S-adenosyl-L-methionine (Cx-SAM). The chain is Carboxy-S-adenosyl-L-methionine synthase from Actinobacillus pleuropneumoniae serotype 7 (strain AP76).